The primary structure comprises 123 residues: Large ribosomal subunit protein bL19c (123 aa).

This sequence belongs to the bacterial ribosomal protein bL19 family.

It localises to the plastid. Its subcellular location is the chloroplast. This chain is Large ribosomal subunit protein bL19c (rpl19), found in Porphyra purpurea (Red seaweed).